Reading from the N-terminus, the 266-residue chain is Glutamate racemase (266 aa).

Residues Asp10–Ser11 and Tyr42–Gly43 contribute to the substrate site. The active-site Proton donor/acceptor is the Cys73. Asn74–Thr75 is a substrate binding site. Residue Cys183 is the Proton donor/acceptor of the active site. Thr184 to His185 is a substrate binding site.

The protein belongs to the aspartate/glutamate racemases family.

It carries out the reaction L-glutamate = D-glutamate. It participates in cell wall biogenesis; peptidoglycan biosynthesis. Its function is as follows. Provides the (R)-glutamate required for cell wall biosynthesis. This is Glutamate racemase from Lactobacillus johnsonii (strain CNCM I-12250 / La1 / NCC 533).